The chain runs to 329 residues: Biotin synthase (329 aa).

In terms of domain architecture, Radical SAM core spans 48–278 (FLGTGVDLCS…DRKIAVCGGR (231 aa)). 3 residues coordinate [4Fe-4S] cluster: cysteine 66, cysteine 70, and cysteine 73. The [2Fe-2S] cluster site is built by serine 143 and cysteine 203.

It belongs to the radical SAM superfamily. Biotin synthase family. In terms of assembly, homodimer. It depends on [4Fe-4S] cluster as a cofactor. [2Fe-2S] cluster is required as a cofactor.

The catalysed reaction is (4R,5S)-dethiobiotin + (sulfur carrier)-SH + 2 reduced [2Fe-2S]-[ferredoxin] + 2 S-adenosyl-L-methionine = (sulfur carrier)-H + biotin + 2 5'-deoxyadenosine + 2 L-methionine + 2 oxidized [2Fe-2S]-[ferredoxin]. Its pathway is cofactor biosynthesis; biotin biosynthesis; biotin from 7,8-diaminononanoate: step 2/2. Catalyzes the conversion of dethiobiotin (DTB) to biotin by the insertion of a sulfur atom into dethiobiotin via a radical-based mechanism. The polypeptide is Biotin synthase (Geobacter sulfurreducens (strain ATCC 51573 / DSM 12127 / PCA)).